The following is a 370-amino-acid chain: Histidinol-phosphate aminotransferase 1 (370 aa).

Lysine 222 carries the N6-(pyridoxal phosphate)lysine modification.

It belongs to the class-II pyridoxal-phosphate-dependent aminotransferase family. Histidinol-phosphate aminotransferase subfamily. Homodimer. It depends on pyridoxal 5'-phosphate as a cofactor.

It carries out the reaction L-histidinol phosphate + 2-oxoglutarate = 3-(imidazol-4-yl)-2-oxopropyl phosphate + L-glutamate. Its pathway is amino-acid biosynthesis; L-histidine biosynthesis; L-histidine from 5-phospho-alpha-D-ribose 1-diphosphate: step 7/9. The protein is Histidinol-phosphate aminotransferase 1 of Bacillus cereus (strain ZK / E33L).